A 1448-amino-acid chain; its full sequence is DNA primase TraC (1448 aa).

Composition is skewed to basic and acidic residues over residues 844-856 (ARVQ…RDPN), 863-872 (SAAKEARKTA), and 882-898 (DAQR…RDRQ). 2 disordered regions span residues 844–915 (ARVQ…INVP) and 952–982 (QGAA…QQAQ). Low complexity predominate over residues 964 to 982 (AQPAPEAQGEAQKPAQQAQ). Residues 1237–1325 (PALVISEGYA…GKAIFPIFAP (89 aa)) enclose the Toprim domain. The segment at 1414–1448 (ISQVQRDEQQHQEQKHVEKKQQQIEQRPRRAARIG) is disordered. The segment covering 1418–1441 (QRDEQQHQEQKHVEKKQQQIEQRP) has biased composition (basic and acidic residues).

In terms of biological role, required for autonomous replication in E.coli. Transferred into the recipient cell during bacterial conjugation. Catalyzes the synthesis of short oligoribonucleotide primers with CpA or pCpA at their 5'-termini on a single-stranded template DNA. This is DNA primase TraC (traC) from Escherichia coli.